The primary structure comprises 263 residues: Phosphoribosylaminoimidazole-succinocarboxamide synthase (263 aa).

The disordered stretch occupies residues 239–263 (MNENEPPKPAGPVLVSSKPDGETRH).

This sequence belongs to the SAICAR synthetase family.

It catalyses the reaction 5-amino-1-(5-phospho-D-ribosyl)imidazole-4-carboxylate + L-aspartate + ATP = (2S)-2-[5-amino-1-(5-phospho-beta-D-ribosyl)imidazole-4-carboxamido]succinate + ADP + phosphate + 2 H(+). Its pathway is purine metabolism; IMP biosynthesis via de novo pathway; 5-amino-1-(5-phospho-D-ribosyl)imidazole-4-carboxamide from 5-amino-1-(5-phospho-D-ribosyl)imidazole-4-carboxylate: step 1/2. The protein is Phosphoribosylaminoimidazole-succinocarboxamide synthase of Chelativorans sp. (strain BNC1).